The chain runs to 802 residues: Leucine--tRNA ligase (802 aa).

A 'HIGH' region motif is present at residues 40-51 (PYPSGAGLHVGH). Positions 576–580 (KMSKS) match the 'KMSKS' region motif. Lysine 579 provides a ligand contact to ATP.

It belongs to the class-I aminoacyl-tRNA synthetase family.

Its subcellular location is the cytoplasm. It carries out the reaction tRNA(Leu) + L-leucine + ATP = L-leucyl-tRNA(Leu) + AMP + diphosphate. The chain is Leucine--tRNA ligase from Bacillus cytotoxicus (strain DSM 22905 / CIP 110041 / 391-98 / NVH 391-98).